Here is a 492-residue protein sequence, read N- to C-terminus: MELNQPPLPTEIDDDAYHKPSFNDLGLKESVLKSVYEAGFTSPSPIQEKAIPAVLQGRDVIAQAQTGTGKTAAFALPIINNLKNNHTIEALVITPTRELAMQISDEIFKLGKHTRTKTVCVYGGQSVKKQCEFIKKNPQVMIATPGRLLDHLKNERIHKFVPKVVVLDESDEMLDMGFLDDIEEIFDYLPSEAQILLFSATMPEPIKRLADKILENPIKIHIAPSNITNTDITQRFYVINEHERAEAIMRLLDTQAPKKSIVFTRTKKEADELHQFLASKNYKSTALHGDMDQRDRRASIMAFKKNDADVLVATDVASRGLDISGVSHVFNYHLPLNTESYIHRIGRTGRAGKKGMAITLVTPLEYKELLRMQKEIDSEIELFEIPTINENQIIKTLHDAKVSEGIISLYEQLTEIFEPSQLVLKLLSLQFETSKIGLNQQEIDAIQNPKEKTPKPSHKKTPQHERARSFKKGQHRDRHPKTNHHSKKPKRR.

The Q motif motif lies at 20-48; sequence PSFNDLGLKESVLKSVYEAGFTSPSPIQE. One can recognise a Helicase ATP-binding domain in the interval 51 to 220; it reads IPAVLQGRDV…DKILENPIKI (170 aa). Position 64-71 (64-71) interacts with ATP; sequence AQTGTGKT. The DEAD box motif lies at 168–171; that stretch reads DESD. The Helicase C-terminal domain occupies 231–393; that stretch reads DITQRFYVIN…EIPTINENQI (163 aa). A disordered region spans residues 445-492; that stretch reads AIQNPKEKTPKPSHKKTPQHERARSFKKGQHRDRHPKTNHHSKKPKRR. Positions 469-492 are enriched in basic residues; sequence SFKKGQHRDRHPKTNHHSKKPKRR.

The protein belongs to the DEAD box helicase family. As to quaternary structure, homodimer. Interacts with RNase J (rnj), might be a member of a minimal RNA degradosome complex.

Its subcellular location is the cytoplasm. It catalyses the reaction ATP + H2O = ADP + phosphate + H(+). Functionally, DEAD-box RNA helicase probably involved in RNA degradation. Unwinds dsRNA in both 5'- and 3'-directions. Background RNA-dependent ATPase activity is stimulated about 5-fold by RNaseJ (rnj). Stimulates the dsRNase activity of RNase J. This Helicobacter pylori (strain B128) protein is DEAD-box ATP-dependent RNA helicase RhpA (rhpA).